Consider the following 315-residue polypeptide: Glutamine synthetase nodule isozyme (315 aa).

Residues 19–99 enclose the GS beta-grasp domain; sequence IIAEYIWVGG…VICDTYTPSG (81 aa). One can recognise a GS catalytic domain in the interval 106-315; the sequence is KRHAAAKIFS…WGVANRGASI (210 aa).

Belongs to the glutamine synthetase family. In terms of assembly, homooctamer.

Its subcellular location is the cytoplasm. The catalysed reaction is L-glutamate + NH4(+) + ATP = L-glutamine + ADP + phosphate + H(+). In Lupinus angustifolius (Narrow-leaved blue lupine), this protein is Glutamine synthetase nodule isozyme.